The sequence spans 83 residues: Antitoxin ParD1 (83 aa).

A coiled-coil region spans residues I33–S60. The tract at residues L54–R83 is disordered.

The protein belongs to the ParD antitoxin family.

Functionally, antitoxin component of a type II toxin-antitoxin (TA) system. This chain is Antitoxin ParD1 (parD1), found in Mycobacterium tuberculosis (strain CDC 1551 / Oshkosh).